Reading from the N-terminus, the 442-residue chain is tRNA-2-methylthio-N(6)-dimethylallyladenosine synthase (442 aa).

The MTTase N-terminal domain maps to 5 to 122; the sequence is KKVFIKTLGC…LPEMIKQKQK (118 aa). Residues cysteine 14, cysteine 51, cysteine 85, cysteine 159, cysteine 163, and cysteine 166 each coordinate [4Fe-4S] cluster. The Radical SAM core domain occupies 145–378; it reads KAEGAKAYVS…DLLNSNAQII (234 aa). One can recognise a TRAM domain in the interval 380 to 442; sequence RQMVGTNQRI…LPNSLRGELI (63 aa).

Belongs to the methylthiotransferase family. MiaB subfamily. As to quaternary structure, monomer. [4Fe-4S] cluster serves as cofactor.

The protein localises to the cytoplasm. It carries out the reaction N(6)-dimethylallyladenosine(37) in tRNA + (sulfur carrier)-SH + AH2 + 2 S-adenosyl-L-methionine = 2-methylsulfanyl-N(6)-dimethylallyladenosine(37) in tRNA + (sulfur carrier)-H + 5'-deoxyadenosine + L-methionine + A + S-adenosyl-L-homocysteine + 2 H(+). Its function is as follows. Catalyzes the methylthiolation of N6-(dimethylallyl)adenosine (i(6)A), leading to the formation of 2-methylthio-N6-(dimethylallyl)adenosine (ms(2)i(6)A) at position 37 in tRNAs that read codons beginning with uridine. The chain is tRNA-2-methylthio-N(6)-dimethylallyladenosine synthase from Francisella tularensis subsp. holarctica (strain FTNF002-00 / FTA).